A 1236-amino-acid polypeptide reads, in one-letter code: ATP-dependent helicase/nuclease subunit A (1236 aa).

Residues 2 to 457 enclose the UvrD-like helicase ATP-binding domain; it reads AHWTIEQEEA…VDLNKNFRSH (456 aa). 23–30 contacts ATP; the sequence is AAAGSGKT. Residues 515–816 enclose the UvrD-like helicase C-terminal domain; the sequence is NTAKRVEICI…RIMSIHKSKG (302 aa).

Belongs to the helicase family. AddA subfamily. In terms of assembly, heterodimer of AddA and AddB/RexB. Requires Mg(2+) as cofactor.

The catalysed reaction is Couples ATP hydrolysis with the unwinding of duplex DNA by translocating in the 3'-5' direction.. It carries out the reaction ATP + H2O = ADP + phosphate + H(+). Its function is as follows. The heterodimer acts as both an ATP-dependent DNA helicase and an ATP-dependent, dual-direction single-stranded exonuclease. Recognizes the chi site generating a DNA molecule suitable for the initiation of homologous recombination. The AddA nuclease domain is required for chi fragment generation; this subunit has the helicase and 3' -&gt; 5' nuclease activities. The chain is ATP-dependent helicase/nuclease subunit A from Syntrophomonas wolfei subsp. wolfei (strain DSM 2245B / Goettingen).